The chain runs to 338 residues: Tryptophan--tRNA ligase (338 aa).

ATP-binding positions include 11 to 13 (QPS) and 19 to 20 (GN). The short motif at 12–20 (PSGELSIGN) is the 'HIGH' region element. Asp135 contacts L-tryptophan. Residues 147–149 (GSD), Val189, and 198–202 (KMSKS) each bind ATP. The short motif at 198–202 (KMSKS) is the 'KMSKS' region element.

This sequence belongs to the class-I aminoacyl-tRNA synthetase family. Homodimer.

The protein localises to the cytoplasm. It carries out the reaction tRNA(Trp) + L-tryptophan + ATP = L-tryptophyl-tRNA(Trp) + AMP + diphosphate + H(+). In terms of biological role, catalyzes the attachment of tryptophan to tRNA(Trp). This chain is Tryptophan--tRNA ligase, found in Vibrio parahaemolyticus serotype O3:K6 (strain RIMD 2210633).